Reading from the N-terminus, the 97-residue chain is Large ribosomal subunit protein bL27 (97 aa).

The interval 1 to 21 (MAHKKGVGSSRNGRDSNPKYR) is disordered.

It belongs to the bacterial ribosomal protein bL27 family.

This chain is Large ribosomal subunit protein bL27, found in Gemmatimonas aurantiaca (strain DSM 14586 / JCM 11422 / NBRC 100505 / T-27).